A 61-amino-acid polypeptide reads, in one-letter code: Large ribosomal subunit protein uL30 (61 aa).

This sequence belongs to the universal ribosomal protein uL30 family. In terms of assembly, part of the 50S ribosomal subunit.

The chain is Large ribosomal subunit protein uL30 from Treponema pallidum subsp. pallidum (strain SS14).